The primary structure comprises 156 residues: 6,7-dimethyl-8-ribityllumazine synthase (156 aa).

5-amino-6-(D-ribitylamino)uracil contacts are provided by residues F23, 57 to 59 (AFE), and 81 to 83 (AVI). Position 86-87 (86-87 (AT)) interacts with (2S)-2-hydroxy-3-oxobutyl phosphate. H89 serves as the catalytic Proton donor. Residue N114 coordinates 5-amino-6-(D-ribitylamino)uracil. Position 128 (R128) interacts with (2S)-2-hydroxy-3-oxobutyl phosphate.

The protein belongs to the DMRL synthase family.

The catalysed reaction is (2S)-2-hydroxy-3-oxobutyl phosphate + 5-amino-6-(D-ribitylamino)uracil = 6,7-dimethyl-8-(1-D-ribityl)lumazine + phosphate + 2 H2O + H(+). Its pathway is cofactor biosynthesis; riboflavin biosynthesis; riboflavin from 2-hydroxy-3-oxobutyl phosphate and 5-amino-6-(D-ribitylamino)uracil: step 1/2. Catalyzes the formation of 6,7-dimethyl-8-ribityllumazine by condensation of 5-amino-6-(D-ribitylamino)uracil with 3,4-dihydroxy-2-butanone 4-phosphate. This is the penultimate step in the biosynthesis of riboflavin. The polypeptide is 6,7-dimethyl-8-ribityllumazine synthase (Aliarcobacter butzleri (strain RM4018) (Arcobacter butzleri)).